The primary structure comprises 570 residues: PTS system lactose-specific EIICB component (570 aa).

Residues 9 to 410 (IEKGKPFFEK…VVDIIIYYPF (402 aa)) form the PTS EIIC type-3 domain. Helical transmembrane passes span 31–51 (GFISAMPVILFSSIFLLIAYV), 65–85 (AILMKPYNYTMGLVAFLVAGT), 104–124 (INFISTMQAAMCGFLFLASDP), 133–153 (AFMGTKGLLTAFLSAFVTVIV), 178–198 (FKDLIPFSAVIIILYALDLVI), 223–243 (GWIGVTIIFGAFALFWFVGIH), 283–303 (MFIVTFGGTGATLVVPFMFMW), 340–360 (VFFIPFVLAPIVNVWIFKLFV), and 382–402 (IIMGTGFGLWSFVLAITLIVV). Residues 467 to 570 (QTNVLVLCAG…LDFVQQQFEN (104 aa)) form the PTS EIIB type-3 domain. Cys474 serves as the catalytic Phosphocysteine intermediate; for EIIB activity. At Cys474 the chain carries Phosphocysteine; by EIIA.

It localises to the cell membrane. It catalyses the reaction lactose(out) + N(pros)-phospho-L-histidyl-[protein] = lactose 6-phosphate(in) + L-histidyl-[protein]. Functionally, the phosphoenolpyruvate-dependent sugar phosphotransferase system (sugar PTS), a major carbohydrate active transport system, catalyzes the phosphorylation of incoming sugar substrates concomitantly with their translocation across the cell membrane. The enzyme II LacEF PTS system is involved in lactose transport, but can also use galactose, isopropyl beta-thio-galactopyranoside and thiomethyl beta-D-galactopyranoside (TMG) as substrates. This is PTS system lactose-specific EIICB component from Staphylococcus aureus.